The primary structure comprises 69 residues: Putative membrane protein insertion efficiency factor (69 aa).

It belongs to the UPF0161 family.

The protein resides in the cell inner membrane. Its function is as follows. Could be involved in insertion of integral membrane proteins into the membrane. This Magnetococcus marinus (strain ATCC BAA-1437 / JCM 17883 / MC-1) protein is Putative membrane protein insertion efficiency factor.